The chain runs to 335 residues: Biotin synthase (335 aa).

The region spanning 41–269 is the Radical SAM core domain; it reads KQIQVCKLIS…TSDVRLSAGR (229 aa). Positions 56, 60, and 63 each coordinate [4Fe-4S] cluster. Residues cysteine 100, cysteine 132, cysteine 192, and arginine 264 each contribute to the [2Fe-2S] cluster site.

It belongs to the radical SAM superfamily. Biotin synthase family. In terms of assembly, homodimer. Requires [4Fe-4S] cluster as cofactor. The cofactor is [2Fe-2S] cluster.

It catalyses the reaction (4R,5S)-dethiobiotin + (sulfur carrier)-SH + 2 reduced [2Fe-2S]-[ferredoxin] + 2 S-adenosyl-L-methionine = (sulfur carrier)-H + biotin + 2 5'-deoxyadenosine + 2 L-methionine + 2 oxidized [2Fe-2S]-[ferredoxin]. Its pathway is cofactor biosynthesis; biotin biosynthesis; biotin from 7,8-diaminononanoate: step 2/2. In terms of biological role, catalyzes the conversion of dethiobiotin (DTB) to biotin by the insertion of a sulfur atom into dethiobiotin via a radical-based mechanism. The chain is Biotin synthase from Nostoc sp. (strain PCC 7120 / SAG 25.82 / UTEX 2576).